A 765-amino-acid polypeptide reads, in one-letter code: NADPH oxidase 5 (765 aa).

An N-terminal lobe of N-terminal regulatory EF domain region spans residues 1 to 77; the sequence is MNTSGDPAQT…LFDSDRSGTI (77 aa). The interval 1–161 is N-terminal regulatory EF domain; sequence MNTSGDPAQT…SCLRESAISL (161 aa). Topologically, residues 1-238 are cytoplasmic; the sequence is MNTSGDPAQT…RAYWHNHRSQ (238 aa). EF-hand domains are found at residues 26–56 and 57–92; these read RWLR…ALHV and KESF…LIHG. 9 residues coordinate Ca(2+): Asp-42, Glu-44, Glu-49, Asp-70, Asp-72, Ser-74, Thr-76, Glu-81, and Asp-106. The interval 78–161 is C-terminal lobe of N-terminal regulatory EF domain; the sequence is TLQELQEALT…SCLRESAISL (84 aa). Residues 93–156 enclose the EF-hand 3; atypical; contains an insert of 28 residues domain; that stretch reads SPMDKLKFLF…RTVLQSCLRE (64 aa). Ile-107 bears the S-nitrosocysteine mark. Ca(2+) contacts are provided by Asp-108, Ser-138, Ser-140, Glu-145, Asp-178, Asp-180, Asn-182, and Glu-189. The segment at 122–141 is disordered; that stretch reads GAGAGPHWASSPLGTGSGSI. In terms of domain architecture, EF-hand 4 spans 165–200; the sequence is KLDQLTLALFESADADGNGAITFEELRDELQRFPGV. Residues 239-259 form a helical membrane-spanning segment; sequence LFCLATYAGLHVLLFGLAASA. At Ala-246 the chain carries S-nitrosocysteine. At 260–266 the chain is on the extracellular side; that stretch reads HRDLGAS. The helical transmembrane segment at 267 to 289 threads the bilayer; it reads VMVAKGCGQCLNFDCSFIAVLML. At 290–317 the chain is on the cytoplasmic side; the sequence is RRCLTWLRATWLAQVLPLDQNIQFHQLM. The Ferric oxidoreductase domain maps to 293–440; that stretch reads LTWLRATWLA…FLEKAIGLAV (148 aa). Residues 318–338 form a helical membrane-spanning segment; it reads GYVVVGLSLVHTVAHTVNFVL. Residues 339–362 are Extracellular-facing; that stretch reads QAQAEASPFQFWELLLTTRPGIGW. Residues 363-383 traverse the membrane as a helical segment; it reads VHGSASPTGVALLLLLLLMFI. Over 384-394 the chain is Cytoplasmic; that stretch reads CSSSCIRRSGH. A helical transmembrane segment spans residues 395-417; sequence FEVFYWTHLSYLLVWLLLIFHGP. C-terminal catalytic dehydrogenase domain stretches follow at residues 398 to 719 and 416 to 737; these read FYWT…GRPD and GPNF…KVQV. At 418–434 the chain is on the extracellular side; the sequence is NFWKWLLVPGILFFLEK. The chain crosses the membrane as a helical span at residues 435-455; it reads AIGLAVSRMAAVCIMEVNLLP. The 137-residue stretch at 441–577 folds into the FAD-binding FR-type domain; that stretch reads SRMAAVCIME…DGPYGTPTRR (137 aa). The Cytoplasmic segment spans residues 456–583; the sequence is SKVTHLLIKR…PTRRIFASEH (128 aa). Position 475 is a phosphoserine; by CaMK2 (Asp-475). Position 490 is a phosphothreonine; by PKC/PRKCA (His-490). Ile-494 is subject to Phosphothreonine; by CaMK2 and PKC/PRKCA. Pro-498 carries the phosphoserine; by CaMK2 and PKC/PRKCA modification. Residue Asp-502 is modified to Phosphoserine; by CaMK2. Tyr-519 carries the post-translational modification S-nitrosocysteine. A helical membrane pass occupies residues 584–604; it reads AVLIGAGIGITPFASILQSIM. The Extracellular portion of the chain corresponds to 605 to 765; that stretch reads YRHQKRKHTC…FGFRFFQENF (161 aa). Residue Asp-659 is modified to Phosphoserine; by CaMK2. Residue Leu-694 is modified to S-nitrosocysteine.

As to quaternary structure, homooligomer. The cofactor is FAD. Requires Mg(2+) as cofactor. In terms of processing, phosphorylation at Ser-475 by CaMK2 and at Ser-490, Thr-494 and Ser-498 by PKC/PRKCA positively regulates its catalytic activity. S-nitrosylation in response to nitric oxide inhibits its catalytic activity. As to expression, mainly expressed in pachytene spermatocytes of testis and in lymphocyte-rich areas of spleen and lymph nodes. Also detected in ovary, placenta, pancreas, cardiac fibroblasts. Expressed in B-cells and prostate malignant cells. Expressed in spleen. Expressed in endothelial cells, pulmonary artery smooth muscle cells and epithelial colorectal adenocarcinoma cells. In terms of tissue distribution, expressed in microvascular endothelial cells (at protein level). Expressed in testis. Expressed in endothelial cells and pulmonary artery smooth muscle cells. As to expression, expressed in pulmonary artery smooth muscle cells and epithelial colorectal adenocarcinoma cells. Expressed in endothelial cells and pulmonary artery smooth muscle cells. In terms of tissue distribution, expressed in microvascular endothelial cells (at protein level).

Its subcellular location is the endoplasmic reticulum. The protein resides in the cell membrane. The enzyme catalyses NADPH + 2 O2 = 2 superoxide + NADP(+) + H(+). Its activity is regulated as follows. Activated by calcium which induces conformational changes and interaction between the N-terminal regulatory region and the C-terminal catalytic region. Inhibited by diphenylene iodonium. Functionally, calcium-dependent NADPH oxidase that catalyzes the generation of superoxide from molecular oxygen utilizing NADPH as an electron donor. May play a role in cell growth and apoptosis. Its function is as follows. Calcium-dependent NADPH oxidase that catalyzes the generation of superoxide from molecular oxygen utilizing NADPH as an electron donor. Involved in endothelial generation of reactive oxygen species (ROS), proliferation and angiogenesis and contributes to endothelial response to thrombin. Regulates redox-dependent processes in lymphocytes and spermatozoa. In terms of biological role, calcium-dependent NADPH oxidase that catalyzes the generation of superoxide from molecular oxygen utilizing NADPH as an electron donor. This isoform lacks calcium-binding domains and was showed to present a NADPH oxidase activity in a calcium-independent manner. May be involved in endothelial generation of reactive oxygen species (ROS), proliferation and angiogenesis and contribute to endothelial response to thrombin. However another study showed an absence of oxidase activity. Subject to rapid degradation. Functionally, lacks calcium-dependent NADPH oxidase activity. The chain is NADPH oxidase 5 from Homo sapiens (Human).